The primary structure comprises 808 residues: DNA gyrase subunit B (808 aa).

Residues 429–544 (SELFIVEGDS…KGYLYIAQPP (116 aa)) enclose the Toprim domain. Positions 435, 509, and 511 each coordinate Mg(2+).

It belongs to the type II topoisomerase GyrB family. Heterotetramer, composed of two GyrA and two GyrB chains. In the heterotetramer, GyrA contains the active site tyrosine that forms a transient covalent intermediate with DNA, while GyrB binds cofactors and catalyzes ATP hydrolysis. Mg(2+) serves as cofactor. Requires Mn(2+) as cofactor. Ca(2+) is required as a cofactor.

Its subcellular location is the cytoplasm. The catalysed reaction is ATP-dependent breakage, passage and rejoining of double-stranded DNA.. A type II topoisomerase that negatively supercoils closed circular double-stranded (ds) DNA in an ATP-dependent manner to modulate DNA topology and maintain chromosomes in an underwound state. Negative supercoiling favors strand separation, and DNA replication, transcription, recombination and repair, all of which involve strand separation. Also able to catalyze the interconversion of other topological isomers of dsDNA rings, including catenanes and knotted rings. Type II topoisomerases break and join 2 DNA strands simultaneously in an ATP-dependent manner. The protein is DNA gyrase subunit B of Rickettsia felis (strain ATCC VR-1525 / URRWXCal2) (Rickettsia azadi).